A 304-amino-acid chain; its full sequence is Protein phosphatase PTC7 homolog (304 aa).

The N-terminal 68 residues, 1–68 (MFSVLSYGRL…GDDACFVARH (68 aa)), are a transit peptide targeting the mitochondrion. Positions 69-299 (RSADVLGVAD…DDITVLLSIV (231 aa)) constitute a PPM-type phosphatase domain. Residues Asp-78, Gly-79, and Asp-223 each contribute to the Mn(2+) site.

This sequence belongs to the PP2C family. In terms of assembly, interacts with FBXL4, BNIP3 and NIX; these interactions are important for ubiquitination and degradation of BNIP3 and NIX. Mg(2+) is required as a cofactor. It depends on Mn(2+) as a cofactor. In terms of tissue distribution, expressed in keratinocytes (at protein level).

Its subcellular location is the mitochondrion matrix. It carries out the reaction O-phospho-L-seryl-[protein] + H2O = L-seryl-[protein] + phosphate. It catalyses the reaction O-phospho-L-threonyl-[protein] + H2O = L-threonyl-[protein] + phosphate. Its activity is regulated as follows. Inhibited by sodium orthovanadate. Its function is as follows. Protein phosphatase that plays an essential role in mitochondrial metabolism and biogenesis. Positively regulates biosynthesis of the ubiquinone, coenzyme Q. Dephosphorylates the ubiquinone biosynthesis protein COQ7 which is likely to lead to its activation. Serves as a crucial sensor for mitophagy, though the underlying mechanism remains ambiguous. May dephosphorylate BNIP3 and NIX and thereby directly regulates mitophagy receptor function and stability. Alternatively, promotes SCF-FBXL4-dependent ubiquitination and degradation of BNIP3 and NIX independently of its catalytic activity to restrain mitophagy. The sequence is that of Protein phosphatase PTC7 homolog (PPTC7) from Homo sapiens (Human).